The following is a 480-amino-acid chain: Probable glycosyltransferase At5g25310 (480 aa).

Topologically, residues 1-10 (MDKFQSKFTR) are cytoplasmic. The helical; Signal-anchor for type II membrane protein transmembrane segment at 11-31 (FGFISICFGSIALVLLISHCS) threads the bilayer. Over 32-480 (TSFFDYSFQK…WLRRLNLKLT (449 aa)) the chain is Lumenal. N85, N120, N243, N271, and N281 each carry an N-linked (GlcNAc...) asparagine glycan.

The protein belongs to the glycosyltransferase 47 family.

Its subcellular location is the golgi apparatus membrane. In terms of biological role, may be involved in cell wall biosynthesis. This chain is Probable glycosyltransferase At5g25310, found in Arabidopsis thaliana (Mouse-ear cress).